A 269-amino-acid chain; its full sequence is Putative hydro-lyase Aave_3512 (269 aa).

The protein belongs to the D-glutamate cyclase family.

This is Putative hydro-lyase Aave_3512 from Paracidovorax citrulli (strain AAC00-1) (Acidovorax citrulli).